The primary structure comprises 538 residues: Dolichol kinase (538 aa).

Topologically, residues 1-18 (MTRECAPPTPGSGAPLSG) are lumenal. Residues 19-39 (SVLAEAAVVFVVVLSIHAAVW) traverse the membrane as a helical segment. Over 40–74 (DRYSWCAVALAVQAFYVQYKWDRLLQQGSAVFQFR) the chain is Cytoplasmic. Residues 75 to 95 (MSANSGLLPASVVMPLLGLVM) form a helical membrane-spanning segment. Residues 96–111 (KERCQAAGNPYFERFG) lie on the Lumenal side of the membrane. Residues 112 to 132 (IVVAATGMAVALFSSVLALGI) form a helical membrane-spanning segment. Residues 133–134 (TR) are Cytoplasmic-facing. Residues 135 to 155 (PVPTNTCVISGLAGGVIIYIM) form a helical membrane-spanning segment. At 156 to 163 (KHSLSVGE) the chain is on the lumenal side. Residues 164–184 (VIEVLEALLIFVYLNMILLYL) form a helical membrane-spanning segment. Over 185 to 188 (LPRC) the chain is Cytoplasmic. Residues 189–209 (FTPGEALLVLGGISFMLNQLI) form a helical membrane-spanning segment. The Lumenal portion of the chain corresponds to 210–224 (KRSLTVVESQGDPLD). A helical membrane pass occupies residues 225-245 (FFLLVVVVGMVLMGIFFSTLF). Over 246–254 (VFMDSGTWA) the chain is Cytoplasmic. Residues 255–275 (SSIFFHLMTCVLGLGVVLPWL) form a helical membrane-spanning segment. At 276–297 (HRLIRRNPLLWLFQFLFQTETR) the chain is on the lumenal side. A helical transmembrane segment spans residues 298 to 318 (VYLLAYWCLLATVACLVVLYQ). At 319 to 337 (NAKRSSSESKKHQAPTITR) the chain is on the cytoplasmic side. The chain crosses the membrane as a helical span at residues 338–354 (KYFHFIVVATYIPGIIL). The Lumenal portion of the chain corresponds to 355–359 (DRPLL). A helical membrane pass occupies residues 360 to 380 (YVAATVCLAVFIFLEYVRYFR). At 381 to 401 (IKPLGHTLRSLLSLFLDERDS) the chain is on the cytoplasmic side. A helical membrane pass occupies residues 402 to 422 (GPLILTHIYLLLGMSLPIWLV). At 423-436 (PRPCTQKGSLGGAR) the chain is on the lumenal side. The chain crosses the membrane as a helical span at residues 437 to 457 (ALVPYAGVLAVGVGDTVASIF). Residues 458–472 (GSTMGEIRWPGTKKT) are Cytoplasmic-facing. The segment at 459–474 (STMGEIRWPGTKKTFE) is CTP-binding. A helical membrane pass occupies residues 473 to 493 (FEGTMTSIFAQIISVALILIF). Topologically, residues 494–495 (DS) are lumenal. The helical transmembrane segment at 496 to 516 (GVDLNYSYAWILGSISTVSLL) threads the bilayer. Topologically, residues 517 to 538 (EAYTTQIDNLLLPLYLLILLMA) are cytoplasmic.

Belongs to the polyprenol kinase family.

The protein localises to the endoplasmic reticulum membrane. It carries out the reaction a di-trans,poly-cis-dolichol + CTP = a di-trans,poly-cis-dolichyl phosphate + CDP + H(+). It participates in protein modification; protein glycosylation. Functionally, catalyzes CTP-mediated phosphorylation of dolichol, the terminal step in de novo dolichyl monophosphate (Dol-P) biosynthesis. Dol-P is a lipid carrier essential for the synthesis of N-linked and O-linked oligosaccharides and for GPI anchors. This is Dolichol kinase (DOLK) from Bos taurus (Bovine).